We begin with the raw amino-acid sequence, 574 residues long: 2-succinyl-5-enolpyruvyl-6-hydroxy-3-cyclohexene-1-carboxylate synthase (574 aa).

The protein belongs to the TPP enzyme family. MenD subfamily. In terms of assembly, homodimer. Requires Mg(2+) as cofactor. Mn(2+) is required as a cofactor. It depends on thiamine diphosphate as a cofactor.

The catalysed reaction is isochorismate + 2-oxoglutarate + H(+) = 5-enolpyruvoyl-6-hydroxy-2-succinyl-cyclohex-3-ene-1-carboxylate + CO2. It participates in quinol/quinone metabolism; 1,4-dihydroxy-2-naphthoate biosynthesis; 1,4-dihydroxy-2-naphthoate from chorismate: step 2/7. The protein operates within cofactor biosynthesis; phylloquinone biosynthesis. Catalyzes the thiamine diphosphate-dependent decarboxylation of 2-oxoglutarate and the subsequent addition of the resulting succinic semialdehyde-thiamine pyrophosphate anion to isochorismate to yield 2-succinyl-5-enolpyruvyl-6-hydroxy-3-cyclohexene-1-carboxylate (SEPHCHC). This chain is 2-succinyl-5-enolpyruvyl-6-hydroxy-3-cyclohexene-1-carboxylate synthase, found in Prochlorococcus marinus (strain SARG / CCMP1375 / SS120).